Here is a 217-residue protein sequence, read N- to C-terminus: Thymidylate kinase (217 aa).

ATP is bound at residue 16-23 (GIDGAGKT).

The protein belongs to the thymidylate kinase family.

It catalyses the reaction dTMP + ATP = dTDP + ADP. Phosphorylation of dTMP to form dTDP in both de novo and salvage pathways of dTTP synthesis. The chain is Thymidylate kinase from Xylella fastidiosa (strain M23).